The following is a 200-amino-acid chain: Small ribosomal subunit protein uS4 (200 aa).

The segment at 22-42 is disordered; sequence TGKELEKRPYAPGPHGPGQRK. One can recognise an S4 RNA-binding domain in the interval 92-152; sequence SRLDNIVYRL…EKSQNLSVVK (61 aa).

The protein belongs to the universal ribosomal protein uS4 family. As to quaternary structure, part of the 30S ribosomal subunit. Contacts protein S5. The interaction surface between S4 and S5 is involved in control of translational fidelity.

Functionally, one of the primary rRNA binding proteins, it binds directly to 16S rRNA where it nucleates assembly of the body of the 30S subunit. In terms of biological role, with S5 and S12 plays an important role in translational accuracy. The protein is Small ribosomal subunit protein uS4 of Bacillus licheniformis (strain ATCC 14580 / DSM 13 / JCM 2505 / CCUG 7422 / NBRC 12200 / NCIMB 9375 / NCTC 10341 / NRRL NRS-1264 / Gibson 46).